Here is a 211-residue protein sequence, read N- to C-terminus: Small ribosomal subunit protein uS5 (211 aa).

An S5 DRBM domain is found at 51 to 114 (LKHEVLDVSL…ANAKLNITPV (64 aa)).

The protein belongs to the universal ribosomal protein uS5 family. In terms of assembly, part of the 30S ribosomal subunit. Contacts protein S4.

With S4 and S12 plays an important role in translational accuracy. The protein is Small ribosomal subunit protein uS5 of Ignicoccus hospitalis (strain KIN4/I / DSM 18386 / JCM 14125).